An 85-amino-acid chain; its full sequence is Putative membrane protein insertion efficiency factor (85 aa).

This sequence belongs to the UPF0161 family.

The protein resides in the cell inner membrane. In terms of biological role, could be involved in insertion of integral membrane proteins into the membrane. In Enterobacter sp. (strain 638), this protein is Putative membrane protein insertion efficiency factor.